The following is a 301-amino-acid chain: Phospholipase A1 (301 aa).

Cysteines 4 and 87 form a disulfide. The active-site Nucleophile is the serine 137. The active-site Charge relay system is aspartate 165. 2 disulfides stabilise this stretch: cysteine 176–cysteine 181 and cysteine 219–cysteine 228. Histidine 230 serves as the catalytic Charge relay system. Cystine bridges form between cysteine 245–cysteine 269, cysteine 246–cysteine 294, and cysteine 262–cysteine 267.

The protein belongs to the AB hydrolase superfamily. Lipase family. Expressed by the venom gland.

The protein resides in the secreted. The enzyme catalyses a 1,2-diacyl-sn-glycero-3-phosphocholine + H2O = a 2-acyl-sn-glycero-3-phosphocholine + a fatty acid + H(+). Functionally, catalyzes the hydrolysis of phosphatidylcholine with phospholipase A1 activity. May act as an allergen and induce hemolytic activity. The sequence is that of Phospholipase A1 from Vespa crabro (European hornet).